Consider the following 729-residue polypeptide: Fatty acid oxidation complex subunit alpha (729 aa).

Residues 1–189 (MLYKGDTLYL…KIGLVDGVVK (189 aa)) are enoyl-CoA hydratase/isomerase. Residue Asp296 participates in substrate binding. The 3-hydroxyacyl-CoA dehydrogenase stretch occupies residues 311 to 729 (ETPKHAAVLG…ARPVGELKTA (419 aa)). NAD(+) is bound by residues Met324, Asp343, 400-402 (VVE), Lys407, and Ser429. Residue His450 is the For 3-hydroxyacyl-CoA dehydrogenase activity of the active site. Residue Asn453 participates in NAD(+) binding. Substrate is bound by residues Asn500 and Tyr660.

In the N-terminal section; belongs to the enoyl-CoA hydratase/isomerase family. It in the C-terminal section; belongs to the 3-hydroxyacyl-CoA dehydrogenase family. In terms of assembly, heterotetramer of two alpha chains (FadB) and two beta chains (FadA).

It catalyses the reaction a (3S)-3-hydroxyacyl-CoA + NAD(+) = a 3-oxoacyl-CoA + NADH + H(+). It carries out the reaction a (3S)-3-hydroxyacyl-CoA = a (2E)-enoyl-CoA + H2O. The catalysed reaction is a 4-saturated-(3S)-3-hydroxyacyl-CoA = a (3E)-enoyl-CoA + H2O. The enzyme catalyses (3S)-3-hydroxybutanoyl-CoA = (3R)-3-hydroxybutanoyl-CoA. It catalyses the reaction a (3Z)-enoyl-CoA = a 4-saturated (2E)-enoyl-CoA. It carries out the reaction a (3E)-enoyl-CoA = a 4-saturated (2E)-enoyl-CoA. The protein operates within lipid metabolism; fatty acid beta-oxidation. Functionally, involved in the aerobic and anaerobic degradation of long-chain fatty acids via beta-oxidation cycle. Catalyzes the formation of 3-oxoacyl-CoA from enoyl-CoA via L-3-hydroxyacyl-CoA. It can also use D-3-hydroxyacyl-CoA and cis-3-enoyl-CoA as substrate. In Enterobacter cloacae, this protein is Fatty acid oxidation complex subunit alpha.